The primary structure comprises 1181 residues: Integrin alpha-7 (1181 aa).

A signal peptide spans 1-33 (MAGARSRDPWGASGICYLFGSLLVELLFSRAVA). Over 34 to 1082 (FNLDVMGALR…MAVVAEGVPW (1049 aa)) the chain is Extracellular. 7 FG-GAP repeats span residues 35 to 103 (NLDV…ETDC), 110 to 175 (QGAD…IRDE), 185 to 238 (EGRP…SADL), 292 to 349 (DRLP…ASRL), 350 to 411 (VPEV…HWAG), 412 to 467 (ISPL…GVVA), and 471 to 530 (QVLE…IAPR). N-linked (GlcNAc...) asparagine glycosylation is present at Asn86. Cystine bridges form between Cys94–Cys103, Cys140–Cys163, and Cys184–Cys197. 13 residues coordinate Ca(2+): Asp372, Asn374, Asp376, Asp380, Asp434, Asn436, Asp438, Asp442, Asp492, Asp494, Asn496, Tyr498, and Asp500. Cystine bridges form between Cys539–Cys546, Cys552–Cys615, Cys681–Cys687, Cys781–Cys792, Cys939–Cys994, and Cys1001–Cys1006. Residue Asn786 is glycosylated (N-linked (GlcNAc...) asparagine). Over residues 950 to 961 (VDSRDRRRRELE) the composition is skewed to basic and acidic residues. The interval 950 to 978 (VDSRDRRRRELEPPEQQEPGERQEPSMSW) is disordered. Asn989 carries N-linked (GlcNAc...) asparagine glycosylation. Asn1025 and Asn1045 each carry an N-linked (GlcNAc...) asparagine glycan. A helical transmembrane segment spans residues 1083–1103 (WVILLAVLAGLLVLALLVLLL). Residues 1104-1181 (WKMGFFKRAK…PDGHPGPGTA (78 aa)) lie on the Cytoplasmic side of the membrane. Residues 1107–1111 (GFFKR) carry the GFFKR motif motif. The tract at residues 1138 to 1181 (EKTGTILRNNWGSPRREGPDAHPILAADGHPELGPDGHPGPGTA) is disordered. 3 consecutive repeat copies span residues 1157–1160 (DAHP), 1165–1168 (DGHP), and 1173–1176 (DGHP). Residues 1157 to 1176 (DAHPILAADGHPELGPDGHP) are 3 X 4 AA repeats of D-X-H-P.

This sequence belongs to the integrin alpha chain family. Heterodimer of an alpha and a beta subunit. The alpha subunit is composed of a heavy and a light chain linked by a disulfide bond. Alpha-7 associates with beta-1. Interacts with COMP. Interacts (via C-terminus intracellular tail region) with CIB1; the interaction is stabilized/increased in a calcium- and magnesium-dependent manner. ADP-ribosylated on at least two sites of the extracellular domain in skeletal myotubes. Post-translationally, a 70 kDa form is created by proteolytic cleavage. Cleavage is elevated during myogenic differentiation and the cleaved form enhances cell adhesion and spreading on laminin. As to expression, isoforms containing segment A are predominantly expressed in skeletal muscle. Isoforms containing segment B are abundantly expressed in skeletal muscle, moderately in cardiac muscle, small intestine, colon, ovary and prostate and weakly in lung and testes. Isoforms containing segment X2D are expressed at low levels in fetal and adult skeletal muscle and in cardiac muscle, but are not detected in myoblasts and myotubes. In muscle fibers isoforms containing segment A and B are expressed at myotendinous and neuromuscular junctions; isoforms containing segment C are expressed at neuromuscular junctions and at extrasynaptic sites. Isoforms containing segments X1 or X2 or, at low levels, X1X2 are expressed in fetal and adult skeletal muscle (myoblasts and myotubes) and cardiac muscle.

The protein localises to the membrane. Its function is as follows. Integrin alpha-7/beta-1 is the primary laminin receptor on skeletal myoblasts and adult myofibers. During myogenic differentiation, it may induce changes in the shape and mobility of myoblasts, and facilitate their localization at laminin-rich sites of secondary fiber formation. It is involved in the maintenance of the myofibers cytoarchitecture as well as for their anchorage, viability and functional integrity. Isoform Alpha-7X2B and isoform Alpha-7X1B promote myoblast migration on laminin 1 and laminin 2/4, but isoform Alpha-7X1B is less active on laminin 1 (In vitro). Acts as a Schwann cell receptor for laminin-2. Acts as a receptor of COMP and mediates its effect on vascular smooth muscle cells (VSMCs) maturation. Required to promote contractile phenotype acquisition in differentiated airway smooth muscle (ASM) cells. This Homo sapiens (Human) protein is Integrin alpha-7 (ITGA7).